Consider the following 601-residue polypeptide: DNA ligase (601 aa).

Aspartate 258 serves as a coordination point for ATP. The active-site N6-AMP-lysine intermediate is the lysine 260. Residues arginine 265, arginine 280, glutamate 310, phenylalanine 350, arginine 427, and lysine 433 each contribute to the ATP site. The interval 568 to 601 (DKSPEDATTTDEILEMYNKQPKKKIESPPIDESV) is disordered.

Belongs to the ATP-dependent DNA ligase family. The cofactor is Mg(2+).

It carries out the reaction ATP + (deoxyribonucleotide)n-3'-hydroxyl + 5'-phospho-(deoxyribonucleotide)m = (deoxyribonucleotide)n+m + AMP + diphosphate.. In terms of biological role, DNA ligase that seals nicks in double-stranded DNA during DNA replication, DNA recombination and DNA repair. The sequence is that of DNA ligase from Saccharolobus islandicus (strain L.S.2.15 / Lassen #1) (Sulfolobus islandicus).